Consider the following 561-residue polypeptide: MAATSSISSSLSLNAKPNKLSNNNNNNKPHRFLRNPFLNPSSSSFSPLPASISSSSSSPSFPLRVSNPLTLLAADNDDYDEKPREECGVVGIYGDSEASRLCYLALHALQHRGQEGAGIVTVSKDKVLQTITGVGLVSEVFSESKLDQLPGDIAIGHVRYSTAGSSMLKNVQPFVAGYRFGSVGVAHNGNLVNYTKLRADLEENGSIFNTSSDTEVVLHLIAISKARPFFMRIVDACEKLQGAYSMVFVTEDKLVAVRDPHGFRPLVMGRRSNGAVVFASETCALDLIEATYEREVYPGEVLVVDKDGVKCQCLMPHPEPKQCIFEHIYFSLPNSIVFGRSVYESRHVFGEILATESPVDCDVVIAVPDSGVVAALGYAAKAGVAFQQGLIRSHYVGRTFIEPSQKIRDFGVKLKLSPVRGVLEGKRVVVVDDSIVRGTTSSKIVRLLREAGAKEVHMRIASPPIIASCYYGVDTPSSNELISNRMSVDEIRDYIGCDSLAFLSFETLKKHLGEDSRSFCYACFTGDYPVKPTEDKVKRGGDFIDDGLVGGIHNIEGGWVR.

Low complexity predominate over residues 1 to 27 (MAATSSISSSLSLNAKPNKLSNNNNNN). Positions 1-36 (MAATSSISSSLSLNAKPNKLSNNNNNNKPHRFLRNP) are disordered. A chloroplast-targeting transit peptide spans 1-53 (MAATSSISSSLSLNAKPNKLSNNNNNNKPHRFLRNPFLNPSSSSFSPLPASIS). Residue cysteine 87 is the Nucleophile of the active site. The region spanning 87 to 307 (CGVVGIYGDS…PGEVLVVDKD (221 aa)) is the Glutamine amidotransferase type-2 domain. [4Fe-4S] cluster is bound by residues cysteine 323, cysteine 469, cysteine 520, and cysteine 523.

In the C-terminal section; belongs to the purine/pyrimidine phosphoribosyltransferase family. [4Fe-4S] cluster is required as a cofactor. It depends on Mg(2+) as a cofactor. As to expression, mostly expressed in leaves, and, to a lower extent, in cotyledons.

The protein resides in the plastid. The protein localises to the chloroplast stroma. It carries out the reaction 5-phospho-beta-D-ribosylamine + L-glutamate + diphosphate = 5-phospho-alpha-D-ribose 1-diphosphate + L-glutamine + H2O. Its pathway is purine metabolism; IMP biosynthesis via de novo pathway; N(1)-(5-phospho-D-ribosyl)glycinamide from 5-phospho-alpha-D-ribose 1-diphosphate: step 1/2. Its activity is regulated as follows. Inhibited by the phenyltriazole acetic acid compound [5-(4-chlorophenyl)-1-isopropyl-1H-[1,2,4]triazol-3-yl]-acetic acid (DAS734), a bleaching herbicide. Functionally, catalyzes the first committed step of 'de novo purine biosynthesis from glutamine. Required for chloroplast biogenesis and cell division. Confers sensitivity to the phenyltriazole acetic acid compound [5-(4-chlorophenyl)-1-isopropyl-1H-[1,2,4]triazol-3-yl]-acetic acid (DAS734), a bleaching herbicide. In Arabidopsis thaliana (Mouse-ear cress), this protein is Amidophosphoribosyltransferase 2, chloroplastic (ASE2).